Consider the following 308-residue polypeptide: Cell division protein FtsX (308 aa).

Topologically, residues 1–24 (MISRFFRHLFEALKSLKRNGWMTV) are cytoplasmic. The chain crosses the membrane as a helical span at residues 25 to 45 (AAVSSVMITLTLVAIFASVIF). The Extracellular portion of the chain corresponds to 46–178 (NTAKLATDIE…NTERLFKLAS (133 aa)). Residues 179–199 (FIRVWGLGIAALLIFIAVFLI) traverse the membrane as a helical segment. Residues 200-236 (SNTIRITIISRSREIQIMRLVGAKNSYIRGPFLLEGA) are Cytoplasmic-facing. Residues 237–257 (FIGLLGAIAPSVLVFIVYQIV) traverse the membrane as a helical segment. At 258–276 (YQSVNKSLVGQNLSMISPD) the chain is on the extracellular side. The chain crosses the membrane as a helical span at residues 277–297 (LFSPLMIALLFVIGVFIGSLG). The Cytoplasmic portion of the chain corresponds to 298–308 (SGISMRRFLKI).

This sequence belongs to the ABC-4 integral membrane protein family. FtsX subfamily. Homodimer. Interacts with FtsE; forms a membrane-associated complex. Interacts (via large extracellular loop) with PcsB (via N-terminal coiled-coil domain). This interaction directs PcsB to equatorial and septal sites of dividing cells.

Its subcellular location is the cell membrane. Functionally, part of the ABC transporter FtsEX involved in asymmetric cellular division facilitating the initiation of sporulation. Required in maintaining normal growth and cellular morphology. The sequence is that of Cell division protein FtsX from Streptococcus pneumoniae serotype 2 (strain D39 / NCTC 7466).